Here is a 442-residue protein sequence, read N- to C-terminus: tRNA-2-methylthio-N(6)-dimethylallyladenosine synthase (442 aa).

The 118-residue stretch at 5-122 folds into the MTTase N-terminal domain; that stretch reads KKVFIKTLGC…LPEMIKQKQK (118 aa). [4Fe-4S] cluster is bound by residues Cys-14, Cys-51, Cys-85, Cys-159, Cys-163, and Cys-166. Residues 145-378 enclose the Radical SAM core domain; the sequence is KAEGAKAYVS…DLLNSNAQII (234 aa). The TRAM domain occupies 380-442; it reads RQMVGTNQRI…LPNSLRGELI (63 aa).

It belongs to the methylthiotransferase family. MiaB subfamily. As to quaternary structure, monomer. Requires [4Fe-4S] cluster as cofactor.

The protein resides in the cytoplasm. The catalysed reaction is N(6)-dimethylallyladenosine(37) in tRNA + (sulfur carrier)-SH + AH2 + 2 S-adenosyl-L-methionine = 2-methylsulfanyl-N(6)-dimethylallyladenosine(37) in tRNA + (sulfur carrier)-H + 5'-deoxyadenosine + L-methionine + A + S-adenosyl-L-homocysteine + 2 H(+). In terms of biological role, catalyzes the methylthiolation of N6-(dimethylallyl)adenosine (i(6)A), leading to the formation of 2-methylthio-N6-(dimethylallyl)adenosine (ms(2)i(6)A) at position 37 in tRNAs that read codons beginning with uridine. This Francisella tularensis subsp. holarctica (strain FTNF002-00 / FTA) protein is tRNA-2-methylthio-N(6)-dimethylallyladenosine synthase.